Here is a 490-residue protein sequence, read N- to C-terminus: 23S rRNA (uracil(1939)-C(5))-methyltransferase RlmD (490 aa).

In terms of domain architecture, TRAM spans 14–75 (APAPAEYPID…SSFEKATLTA (62 aa)). Positions 88, 98, 101, and 180 each coordinate [4Fe-4S] cluster. S-adenosyl-L-methionine is bound by residues Gln-289, Phe-318, Asn-323, Glu-339, Asn-374, and Asp-395. Cys-446 acts as the Nucleophile in catalysis.

Belongs to the class I-like SAM-binding methyltransferase superfamily. RNA M5U methyltransferase family. RlmD subfamily.

The enzyme catalyses uridine(1939) in 23S rRNA + S-adenosyl-L-methionine = 5-methyluridine(1939) in 23S rRNA + S-adenosyl-L-homocysteine + H(+). Functionally, catalyzes the formation of 5-methyl-uridine at position 1939 (m5U1939) in 23S rRNA. This Polaromonas naphthalenivorans (strain CJ2) protein is 23S rRNA (uracil(1939)-C(5))-methyltransferase RlmD.